The chain runs to 230 residues: Glutathione S-transferase 2 (230 aa).

Residues 2-86 (AHFTLYSHAG…YLADKYDTDR (85 aa)) form the GST N-terminal domain. Residues 93-230 (DDPEYYKLIQ…EELAKAKEQH (138 aa)) enclose the GST C-terminal domain.

This sequence belongs to the GST superfamily.

The catalysed reaction is RX + glutathione = an S-substituted glutathione + a halide anion + H(+). In terms of biological role, involved in the oxidative stress response and detoxification. This chain is Glutathione S-transferase 2 (gst2), found in Schizosaccharomyces pombe (strain 972 / ATCC 24843) (Fission yeast).